The following is a 1464-amino-acid chain: Sister chromatid cohesion protein PDS5 homolog B-B (1464 aa).

An HEAT repeat occupies 383–419; that stretch reads LLVNDQLLNFVRERTLDKRWRVRKEAMMGLAQIYKKY. A disordered region spans residues 1126-1464; it reads KSTNVLGAVN…MKSELEGPLL (339 aa). The segment covering 1137–1155 has biased composition (polar residues); that stretch reads PLSSAGKQMQSKSSRMETV. Residues 1156 to 1168 show a composition bias toward low complexity; it reads SNASSGSNPSSPG. Positions 1177 to 1186 are enriched in acidic residues; it reads TELDQIEYED. Basic and acidic residues-rich tracts occupy residues 1197–1215, 1234–1244, and 1265–1274; these read KKSD…VEKP, ELSKPAQEPKS, and WQEKRLKEDL. A compositionally biased stretch (basic residues) spans 1286–1295; that stretch reads KKGRRGRPPK. A DNA-binding region (a.T hook 1) is located at residues 1287–1299; it reads KGRRGRPPKSAKM. Residues 1325-1342 show a composition bias toward acidic residues; that stretch reads PTDEEDHLEISEEQDSEN. Over residues 1347–1357 the composition is skewed to basic residues; that stretch reads RKGRGSSKKTP. Polar residues predominate over residues 1359 to 1373; the sequence is KSDSTDSALDTSRPT. 2 DNA-binding regions (a.T hook) span residues 1375 to 1387 and 1391 to 1403; these read QKRR…TPTV and KSHV…VVSK. The segment covering 1390–1400 has biased composition (basic residues); the sequence is KKSHVGRPRKV. Residues 1425 to 1435 show a composition bias toward acidic residues; sequence SNEEETADEEV. Over residues 1441–1453 the composition is skewed to basic residues; sequence GRRRTAKKRRWIQ. Residues 1455–1464 show a composition bias toward basic and acidic residues; sequence MKSELEGPLL.

It belongs to the PDS5 family. As to quaternary structure, interacts with the cohesin complex. In terms of processing, phosphorylated in mitotic cells.

It is found in the nucleus. Its function is as follows. Plays a role in androgen-induced proliferative arrest. Required for maintenance of sister chromatid cohesion during mitosis. The sequence is that of Sister chromatid cohesion protein PDS5 homolog B-B (pds5b-b) from Xenopus laevis (African clawed frog).